A 160-amino-acid polypeptide reads, in one-letter code: Cytochrome b6-f complex subunit 4 (160 aa).

3 helical membrane-spanning segments follow: residues Leu36 to Val56, Leu95 to Glu115, and Ala131 to Ile151.

Belongs to the cytochrome b family. PetD subfamily. In terms of assembly, the 4 large subunits of the cytochrome b6-f complex are cytochrome b6, subunit IV (17 kDa polypeptide, PetD), cytochrome f and the Rieske protein, while the 4 small subunits are PetG, PetL, PetM and PetN. The complex functions as a dimer.

Its subcellular location is the cellular thylakoid membrane. Its function is as follows. Component of the cytochrome b6-f complex, which mediates electron transfer between photosystem II (PSII) and photosystem I (PSI), cyclic electron flow around PSI, and state transitions. In Prochlorococcus marinus (strain SARG / CCMP1375 / SS120), this protein is Cytochrome b6-f complex subunit 4.